Reading from the N-terminus, the 417-residue chain is Imidazolonepropionase (417 aa).

Residues H77 and H79 each coordinate Fe(3+). The Zn(2+) site is built by H77 and H79. 4-imidazolone-5-propanoate contacts are provided by R86, Y149, and H182. Y149 contacts N-formimidoyl-L-glutamate. H244 provides a ligand contact to Fe(3+). H244 is a binding site for Zn(2+). Position 247 (E247) interacts with 4-imidazolone-5-propanoate. D323 serves as a coordination point for Fe(3+). D323 is a binding site for Zn(2+). An N-formimidoyl-L-glutamate-binding site is contributed by N325.

This sequence belongs to the metallo-dependent hydrolases superfamily. HutI family. Requires Zn(2+) as cofactor. The cofactor is Fe(3+).

Its subcellular location is the cytoplasm. It carries out the reaction 4-imidazolone-5-propanoate + H2O = N-formimidoyl-L-glutamate. Its pathway is amino-acid degradation; L-histidine degradation into L-glutamate; N-formimidoyl-L-glutamate from L-histidine: step 3/3. Its function is as follows. Catalyzes the hydrolytic cleavage of the carbon-nitrogen bond in imidazolone-5-propanoate to yield N-formimidoyl-L-glutamate. It is the third step in the universal histidine degradation pathway. The polypeptide is Imidazolonepropionase (Halobacterium salinarum (strain ATCC 29341 / DSM 671 / R1)).